Here is a 72-residue protein sequence, read N- to C-terminus: MPKDDSIEVEGTVMEPLPNAMFRVVLDNGHKVLAHISGKMRMHFIRILPGDKVKVELSPYDLTRGRITYRAK.

Residues 1–72 (MPKDDSIEVE…TRGRITYRAK (72 aa)) form the S1-like domain.

It belongs to the IF-1 family. Component of the 30S ribosomal translation pre-initiation complex which assembles on the 30S ribosome in the order IF-2 and IF-3, IF-1 and N-formylmethionyl-tRNA(fMet); mRNA recruitment can occur at any time during PIC assembly.

It localises to the cytoplasm. One of the essential components for the initiation of protein synthesis. Stabilizes the binding of IF-2 and IF-3 on the 30S subunit to which N-formylmethionyl-tRNA(fMet) subsequently binds. Helps modulate mRNA selection, yielding the 30S pre-initiation complex (PIC). Upon addition of the 50S ribosomal subunit IF-1, IF-2 and IF-3 are released leaving the mature 70S translation initiation complex. The chain is Translation initiation factor IF-1 from Myxococcus xanthus (strain DK1622).